The sequence spans 296 residues: tRNA dimethylallyltransferase (296 aa).

2–9 lines the ATP pocket; it reads GPTASGKT. 4 to 9 serves as a coordination point for substrate; sequence TASGKT. Interaction with substrate tRNA regions lie at residues 27 to 30, 151 to 155, and 232 to 237; these read DSAL, QRLAR, and RCVGYR.

It belongs to the IPP transferase family. As to quaternary structure, monomer. Mg(2+) is required as a cofactor.

It carries out the reaction adenosine(37) in tRNA + dimethylallyl diphosphate = N(6)-dimethylallyladenosine(37) in tRNA + diphosphate. In terms of biological role, catalyzes the transfer of a dimethylallyl group onto the adenine at position 37 in tRNAs that read codons beginning with uridine, leading to the formation of N6-(dimethylallyl)adenosine (i(6)A). In Shewanella pealeana (strain ATCC 700345 / ANG-SQ1), this protein is tRNA dimethylallyltransferase.